The chain runs to 370 residues: Peptide chain release factor 2 (370 aa).

The residue at position 249 (Q249) is an N5-methylglutamine.

The protein belongs to the prokaryotic/mitochondrial release factor family. Methylated by PrmC. Methylation increases the termination efficiency of RF2.

The protein resides in the cytoplasm. In terms of biological role, peptide chain release factor 2 directs the termination of translation in response to the peptide chain termination codons UGA and UAA. The polypeptide is Peptide chain release factor 2 (Kosmotoga olearia (strain ATCC BAA-1733 / DSM 21960 / TBF 19.5.1)).